Consider the following 233-residue polypeptide: Transcriptional regulatory protein PrrA (233 aa).

Residues 9-123 (RVLVVDDDSD…ELVARVKALL (115 aa)) form the Response regulatory domain. Aspartate 58 is subject to 4-aspartylphosphate. Positions 134-232 (SETIAVGPLE…VRGVGFVLRM (99 aa)) form a DNA-binding region, ompR/PhoB-type.

In terms of processing, phosphorylated by PrrB at Asp-58.

It localises to the cytoplasm. In terms of biological role, member of the two-component regulatory system PrrB/PrrA that is involved specifically in early intracellular multiplication of Mycobacterium and is essential for its viability. Upon phosphorylation by PrrB, functions as a transcription regulator by direct binding to promoter regions of target genes to positively regulate their expression. Autoregulates its own expression. This Mycobacterium leprae (strain TN) protein is Transcriptional regulatory protein PrrA (prrA).